Consider the following 824-residue polypeptide: Molybdenum cofactor sulfurase (824 aa).

At lysine 274 the chain carries N6-(pyridoxal phosphate)lysine. Cysteine 433 is a catalytic residue. An MOSC domain is found at 655-822 (CSSSKYRSCT…LQVGQQVYPS (168 aa)).

This sequence belongs to the class-V pyridoxal-phosphate-dependent aminotransferase family. MOCOS subfamily. Requires pyridoxal 5'-phosphate as cofactor.

It catalyses the reaction Mo-molybdopterin + L-cysteine + AH2 = thio-Mo-molybdopterin + L-alanine + A + H2O. It functions in the pathway cofactor biosynthesis; molybdopterin biosynthesis. In terms of biological role, sulfurates the molybdenum cofactor. Sulfation of molybdenum is essential for xanthine dehydrogenase (XDH) and aldehyde oxidase (ADO) enzymes in which molybdenum cofactor is liganded by 1 oxygen and 1 sulfur atom in active form. The chain is Molybdenum cofactor sulfurase (MCSU3) from Oryza sativa subsp. japonica (Rice).